Consider the following 180-residue polypeptide: MAEEKDKKQSSRRRNNRRTEKESEWQERVVQIRRVTKVVKGGKKLSFRAIVIVGNERGQVGVGVGKASDVIGAVRKGVADGKKHLVNVPLTRDQSIPHPSTGEGGAAQVLIRPAAPGTGVIAGGAVRTVLELAGVKNVLAKRLGSKSPLNNARAALEALSSLRTFQEVAQSRDIPVEQLY.

The disordered stretch occupies residues 1-26; sequence MAEEKDKKQSSRRRNNRRTEKESEWQ. Residues 17-26 show a composition bias toward basic and acidic residues; sequence RRTEKESEWQ. Residues 25-88 enclose the S5 DRBM domain; that stretch reads WQERVVQIRR…ADGKKHLVNV (64 aa).

It belongs to the universal ribosomal protein uS5 family. As to quaternary structure, part of the 30S ribosomal subunit. Contacts proteins S4 and S8.

Its function is as follows. With S4 and S12 plays an important role in translational accuracy. In terms of biological role, located at the back of the 30S subunit body where it stabilizes the conformation of the head with respect to the body. In Synechococcus elongatus (strain ATCC 33912 / PCC 7942 / FACHB-805) (Anacystis nidulans R2), this protein is Small ribosomal subunit protein uS5.